Reading from the N-terminus, the 347-residue chain is NADH-ubiquinone oxidoreductase chain 2 (347 aa).

The next 11 helical transmembrane spans lie at 3–23 (PLIL…VMMS), 25–45 (HWLM…PLLM), 59–79 (YFLT…INLM), 96–116 (IIMT…FWVP), 122–142 (ISLT…LSIL), 148–168 (VINP…GGWG), 178–198 (ILAY…AFNP), 202–222 (LLNL…FMVA), 240–260 (ITTS…LAGF), 276–296 (IILA…YIRL), and 326–346 (LPPL…MILL).

It belongs to the complex I subunit 2 family. Core subunit of respiratory chain NADH dehydrogenase (Complex I) which is composed of 45 different subunits. Interacts with TMEM242.

The protein resides in the mitochondrion inner membrane. It carries out the reaction a ubiquinone + NADH + 5 H(+)(in) = a ubiquinol + NAD(+) + 4 H(+)(out). Its function is as follows. Core subunit of the mitochondrial membrane respiratory chain NADH dehydrogenase (Complex I) which catalyzes electron transfer from NADH through the respiratory chain, using ubiquinone as an electron acceptor. Essential for the catalytic activity and assembly of complex I. This Peropteryx kappleri (Greater dog-like bat) protein is NADH-ubiquinone oxidoreductase chain 2.